The sequence spans 637 residues: Acetolactate synthase 2, chloroplastic (637 aa).

Residues 1–73 constitute a chloroplast transit peptide; that stretch reads MASFSFFGTI…SSKYAPNVPR (73 aa). The disordered stretch occupies residues 35–69; that stretch reads RRATRVSVSANSKKDQDRTASRRENPSTFSSKYAP. The span at 46 to 59 shows a compositional bias: basic and acidic residues; that stretch reads SKKDQDRTASRREN. Position 120 (glutamate 120) interacts with thiamine diphosphate. FAD contacts are provided by residues arginine 222, 329-350, and 372-391; these read HGTV…FGVR and DIDS…VCCD. Positions 462 to 542 are thiamine pyrophosphate binding; it reads QHQMWAAQFY…VKVLLINNQH (81 aa). Aspartate 513 and asparagine 540 together coordinate Mg(2+).

It belongs to the TPP enzyme family. The cofactor is Mg(2+). Thiamine diphosphate serves as cofactor.

The protein resides in the plastid. Its subcellular location is the chloroplast. The catalysed reaction is 2 pyruvate + H(+) = (2S)-2-acetolactate + CO2. It functions in the pathway amino-acid biosynthesis; L-isoleucine biosynthesis; L-isoleucine from 2-oxobutanoate: step 1/4. Its pathway is amino-acid biosynthesis; L-valine biosynthesis; L-valine from pyruvate: step 1/4. This Brassica napus (Rape) protein is Acetolactate synthase 2, chloroplastic.